A 520-amino-acid chain; its full sequence is Bifunctional dihydrofolate reductase-thymidylate synthase (520 aa).

Positions alanine 26–proline 229 constitute a DHFR domain. Valine 30 serves as a coordination point for substrate. Residues alanine 32 and glycine 38–serine 44 contribute to the NADP(+) site. Substrate is bound at residue aspartate 52. NADP(+)-binding positions include arginine 81 to threonine 83, leucine 102 to lysine 105, and glycine 157 to aspartate 164. Residues tyrosine 162 and threonine 180 each contribute to the substrate site. Positions glutamate 234 to valine 520 are thymidylate synthase. A dUMP-binding site is contributed by arginine 254. Cysteine 400 is a catalytic residue. DUMP contacts are provided by residues histidine 401, glutamine 421 to aspartate 425, asparagine 433, and histidine 463 to tyrosine 465.

This sequence in the N-terminal section; belongs to the dihydrofolate reductase family. In the C-terminal section; belongs to the thymidylate synthase family.

The enzyme catalyses (6S)-5,6,7,8-tetrahydrofolate + NADP(+) = 7,8-dihydrofolate + NADPH + H(+). The catalysed reaction is dUMP + (6R)-5,10-methylene-5,6,7,8-tetrahydrofolate = 7,8-dihydrofolate + dTMP. Its pathway is cofactor biosynthesis; tetrahydrofolate biosynthesis; 5,6,7,8-tetrahydrofolate from 7,8-dihydrofolate: step 1/1. Bifunctional enzyme. Involved in de novo dTMP biosynthesis. Key enzyme in folate metabolism. Catalyzes an essential reaction for de novo glycine and purine synthesis, DNA precursor synthesis, and for the conversion of dUMP to dTMP. This chain is Bifunctional dihydrofolate reductase-thymidylate synthase, found in Leishmania major.